The sequence spans 331 residues: dTDP-glucose 4,6-dehydratase (331 aa).

Residues 11 to 12 (FI), 33 to 36 (DALT), 57 to 58 (DI), 77 to 81 (FAAES), and T96 contribute to the NAD(+) site. S81 is a substrate binding site. T120 provides a ligand contact to substrate. D121 (proton donor) is an active-site residue. Catalysis depends on proton acceptor residues E122 and Y147. An NAD(+)-binding site is contributed by 147–151 (YSATK). Substrate is bound at residue N176. NAD(+) is bound at residue N177. Substrate contacts are provided by residues 186–191 (KFIPRQ), 202–204 (KLY), R211, N246, and 269–273 (DRVGH).

Belongs to the NAD(P)-dependent epimerase/dehydratase family. dTDP-glucose dehydratase subfamily. Homodimer. The cofactor is NAD(+).

The catalysed reaction is dTDP-alpha-D-glucose = dTDP-4-dehydro-6-deoxy-alpha-D-glucose + H2O. It participates in carbohydrate biosynthesis; dTDP-L-rhamnose biosynthesis. Catalyzes the dehydration of dTDP-D-glucose to form dTDP-6-deoxy-D-xylo-4-hexulose via a three-step process involving oxidation, dehydration and reduction. Involved in the biosynthesis of the dTDP-L-rhamnose which is a component of the critical linker, D-N-acetylglucosamine-L-rhamnose disaccharide, which connects the galactan region of arabinogalactan to peptidoglycan via a phosphodiester linkage. The chain is dTDP-glucose 4,6-dehydratase (rmlB) from Mycobacterium tuberculosis (strain CDC 1551 / Oshkosh).